Reading from the N-terminus, the 363-residue chain is D-proline dehydrogenase (363 aa).

3–17 is an FAD binding site; that stretch reads VAIVGGGIIGLFTAY.

This sequence belongs to the DadA oxidoreductase family. In terms of assembly, homotetramer. Requires FAD as cofactor.

The protein localises to the cell membrane. The catalysed reaction is D-proline + A = 1-pyrroline-2-carboxylate + AH2. Its function is as follows. Catalyzes the dehydrogenation of D-proline. Can also use other D-amino acids, but with lower efficiency. The polypeptide is D-proline dehydrogenase (dpdh) (Pyrobaculum islandicum (strain DSM 4184 / JCM 9189 / GEO3)).